A 317-amino-acid chain; its full sequence is (2S)-3-sulfopropanediol dehydratase activating enzyme (317 aa).

The Radical SAM core domain occupies 18–306 (HDGPGLRTEL…QMLAEYFNQR (289 aa)). Positions 32, 36, 39, 58, 64, 67, 71, 92, 95, 98, and 102 each coordinate [4Fe-4S] cluster. 38–40 (WCS) contributes to the S-adenosyl-L-methionine binding site. 4Fe-4S ferredoxin-type domains follow at residues 49-82 (AQVGVYKTKCISYKKCAACEETCPQENILQFTRG) and 83-112 (KLTSIERHDCTNCLACHNACPSDAIKLWGK). Residues Gly-142 and 191-193 (DIK) contribute to the S-adenosyl-L-methionine site.

This sequence belongs to the organic radical-activating enzymes family. Requires [4Fe-4S] cluster as cofactor.

It carries out the reaction glycyl-[protein] + reduced [flavodoxin] + S-adenosyl-L-methionine = glycin-2-yl radical-[protein] + semiquinone [flavodoxin] + 5'-deoxyadenosine + L-methionine + H(+). It functions in the pathway organosulfur degradation; alkanesulfonate degradation. Functionally, involved in the degradation of the organosulfur compound 2(S)-dihydroxypropanesulfonate (DHPS). Catalyzes activation of the (2S)-3-sulfopropanediol dehydratase HpfG under anaerobic conditions by generation of an organic free radical on a glycine residue. The polypeptide is (2S)-3-sulfopropanediol dehydratase activating enzyme (Klebsiella oxytoca).